Consider the following 267-residue polypeptide: Protein I267L (267 aa).

It belongs to the asfivirus I267L family. In terms of assembly, interacts with host RNF135.

Plays a role in the inhibition of host RNA Pol-III-RIGI-mediated innate antiviral response. Mechanistically, interacts with host E3 ubiquitin ligase RNF135, disrupting RNF135-RIGI interaction and impairing RNF135-mediated 'Lys-63'-polyubiquitination and activation of RIGI. The protein is Protein I267L of African swine fever virus (strain Badajoz 1971 Vero-adapted) (Ba71V).